Consider the following 265-residue polypeptide: MSKTTIIERIWPAKEIIEDLSELRKQSPLTHVITNIVVTNWTANVLLAIGSSPAMVIAKEEAGEFAKIASGLLINIGTVTSNDAITMKIAAEAAHQAKIPWVLDPVAVGALGFRTELAKELLNFKPTVIRGNASEILALAGTDGGGKGVDSTALSSDALPLAQMLAEKTGAVIAISGEIDYVTNGKETISISGGDPIMTKVTGVGCSLGGVIASFLGVQKDPLRATATASAVFAIAGTRSAKISKGSGSFAVNFLDQLNLLSTEK.

Met55 is a binding site for substrate. Residues Arg130 and Ser176 each contribute to the ATP site. Gly203 contributes to the substrate binding site.

Belongs to the Thz kinase family. It depends on Mg(2+) as a cofactor.

The enzyme catalyses 5-(2-hydroxyethyl)-4-methylthiazole + ATP = 4-methyl-5-(2-phosphooxyethyl)-thiazole + ADP + H(+). Its pathway is cofactor biosynthesis; thiamine diphosphate biosynthesis; 4-methyl-5-(2-phosphoethyl)-thiazole from 5-(2-hydroxyethyl)-4-methylthiazole: step 1/1. Its function is as follows. Catalyzes the phosphorylation of the hydroxyl group of 4-methyl-5-beta-hydroxyethylthiazole (THZ). The sequence is that of Hydroxyethylthiazole kinase from Leptospira interrogans serogroup Icterohaemorrhagiae serovar copenhageni (strain Fiocruz L1-130).